The chain runs to 185 residues: ATP synthase subunit b, chloroplastic (185 aa).

A helical membrane pass occupies residues 27–49 (LATNPINLSVVLGVLIFFGKGVL).

The protein belongs to the ATPase B chain family. F-type ATPases have 2 components, F(1) - the catalytic core - and F(0) - the membrane proton channel. F(1) has five subunits: alpha(3), beta(3), gamma(1), delta(1), epsilon(1). F(0) has four main subunits: a(1), b(1), b'(1) and c(10-14). The alpha and beta chains form an alternating ring which encloses part of the gamma chain. F(1) is attached to F(0) by a central stalk formed by the gamma and epsilon chains, while a peripheral stalk is formed by the delta, b and b' chains.

Its subcellular location is the plastid. It localises to the chloroplast thylakoid membrane. Its function is as follows. F(1)F(0) ATP synthase produces ATP from ADP in the presence of a proton or sodium gradient. F-type ATPases consist of two structural domains, F(1) containing the extramembraneous catalytic core and F(0) containing the membrane proton channel, linked together by a central stalk and a peripheral stalk. During catalysis, ATP synthesis in the catalytic domain of F(1) is coupled via a rotary mechanism of the central stalk subunits to proton translocation. In terms of biological role, component of the F(0) channel, it forms part of the peripheral stalk, linking F(1) to F(0). This chain is ATP synthase subunit b, chloroplastic, found in Vitis vinifera (Grape).